The chain runs to 104 residues: Viral histone-like protein (104 aa).

Belongs to the bacterial histone-like protein family. In terms of assembly, homodimer.

The protein resides in the virion. Stilbene derivatives SD1 and SD4 disrupt the binding between pA104R and DNA and inhibit the viral replication in primary alveolar macrophages. In terms of biological role, DNA-binding protein that plays a critical role in nucleoid compaction, genome replication and DNA replication and transcription. Binds to both ssDNA and dsDNA with a binding site covering about 15 nucleotides. Displays DNA-supercoiling activity only when associated with the viral DNA topoisomerase 2. In African swine fever virus (strain Badajoz 1971 Vero-adapted) (Ba71V), this protein is Viral histone-like protein.